Here is a 158-residue protein sequence, read N- to C-terminus: uncharacterized protein (158 aa).

This is an uncharacterized protein from Ureaplasma parvum serovar 3 (strain ATCC 700970).